Consider the following 488-residue polypeptide: Transmembrane protein 39A (488 aa).

N-linked (GlcNAc...) asparagine glycosylation is found at asparagine 31 and asparagine 39. A run of 8 helical transmembrane segments spans residues 72-92 (SLLFEFLFFIYLLVALFIQYI), 110-130 (TSLNFHLIDYHLAAFITVMLA), 154-174 (VLISARLVLLTLCGWVLCWTL), 182-202 (SVLNLLFLGYPFGVYVPLCCF), 287-307 (EVLFNSLFSAYYVAFLPLCFV), 319-339 (CEHLIMVWINAFVMLTTQLLP), 420-440 (LLNLLILIEGSVVFYQLYSLL), and 446-466 (NHTLSMALILFCNYYVLFKLL).

This sequence belongs to the TMEM39 family. Interacts with SACM1L, SEC23A and SEC24A. In terms of assembly, (Microbial infection) Interacts with encephalomyocarditis virus (EMCV) major capsid proteins VP1 and VP2. Up-regulated in brain tumor glioblastoma multiforme cells (at protein level).

The protein resides in the endoplasmic reticulum membrane. Regulates autophagy by controlling the spatial distribution and levels of the intracellular phosphatidylinositol 4-phosphate (PtdIns(4)P) pools. Modulates (PtdIns(4)P) levels by regulating the ER-to-Golgi trafficking of the phosphatidylinositide phosphatase SACM1L. In terms of biological role, (Microbial infection) Positively regulates the replication of encephalomyocarditis virus (EMCV) via autophagy-dependent pathway. In Homo sapiens (Human), this protein is Transmembrane protein 39A (TMEM39A).